A 274-amino-acid chain; its full sequence is Protein bax (274 aa).

Residues 32-64 (TTASQKSHLTKASNKQVSSKQEYSRNSAKSSSL) show a composition bias toward polar residues. Residues 32-74 (TTASQKSHLTKASNKQVSSKQEYSRNSAKSSSLPDLRKYPSGT) form a disordered region. 247 to 254 (GYSTKGKS) provides a ligand contact to ATP.

The protein is Protein bax (bax) of Escherichia coli (strain K12).